The sequence spans 113 residues: U11-theraphotoxin-Hhn1a (113 aa).

An N-terminal signal peptide occupies residues 1–21 (MNTVRVTFLLVFVLAVSLGRA). A propeptide spanning residues 22 to 74 (DKEENRMEMQEKTEQGKSYLDFAENLLLQKLEELEAKLLEEDSEESRNSRQKR) is cleaved from the precursor. A disordered region spans residues 61–83 (EEDSEESRNSRQKRCIGEGVPCD). Cystine bridges form between cysteine 75-cysteine 90, cysteine 82-cysteine 95, and cysteine 89-cysteine 110.

It belongs to the neurotoxin 14 (magi-1) family. 01 (HNTX-16) subfamily. As to expression, expressed by the venom gland.

It localises to the secreted. Its function is as follows. Probable ion channel inhibitor. The polypeptide is U11-theraphotoxin-Hhn1a (Cyriopagopus hainanus (Chinese bird spider)).